Here is a 467-residue protein sequence, read N- to C-terminus: uncharacterized protein (467 aa).

The interval 416–467 (KQQRAQTAVVGTTKELVSKATHMKPPRTPPGEAEHRKRSQSLAICQWNKNSR) is disordered. Over residues 455-467 (QSLAICQWNKNSR) the composition is skewed to polar residues.

This is an uncharacterized protein from Homo sapiens (Human).